The following is a 118-amino-acid chain: MARIAGINIANHKHVVVALMDVYGIGKTRSKLICLRTNISESIKILDLTKDQLELLRCEVLKFVVEGDLRREVTLSIKRLQDLNCYRGSRHRKKLPVRGQRTKTNARTRKGPRKLMKK.

The disordered stretch occupies residues 93 to 118 (KKLPVRGQRTKTNARTRKGPRKLMKK).

The protein belongs to the universal ribosomal protein uS13 family. Part of the 30S ribosomal subunit. Forms a loose heterodimer with protein S19. Forms two bridges to the 50S subunit in the 70S ribosome.

In terms of biological role, located at the top of the head of the 30S subunit, it contacts several helices of the 16S rRNA. In the 70S ribosome it contacts the 23S rRNA (bridge B1a) and protein L5 of the 50S subunit (bridge B1b), connecting the 2 subunits; these bridges are implicated in subunit movement. Contacts the tRNAs in the A and P-sites. This Buchnera aphidicola subsp. Baizongia pistaciae (strain Bp) protein is Small ribosomal subunit protein uS13.